Consider the following 211-residue polypeptide: LexA repressor (211 aa).

Residues 27–47 (QTEIARAFGFKGVRAVQHHLD) constitute a DNA-binding region (H-T-H motif). Active-site for autocatalytic cleavage activity residues include Ser131 and Lys168.

The protein belongs to the peptidase S24 family. In terms of assembly, homodimer.

The catalysed reaction is Hydrolysis of Ala-|-Gly bond in repressor LexA.. Its function is as follows. Represses a number of genes involved in the response to DNA damage (SOS response), including recA and lexA. In the presence of single-stranded DNA, RecA interacts with LexA causing an autocatalytic cleavage which disrupts the DNA-binding part of LexA, leading to derepression of the SOS regulon and eventually DNA repair. The chain is LexA repressor from Xylella fastidiosa (strain 9a5c).